The primary structure comprises 344 residues: Uroporphyrinogen decarboxylase (344 aa).

Residues 26 to 30 (RQAGR), Asp-75, Tyr-150, Ser-205, and His-323 each bind substrate.

This sequence belongs to the uroporphyrinogen decarboxylase family. As to quaternary structure, homodimer.

The protein localises to the cytoplasm. It carries out the reaction uroporphyrinogen III + 4 H(+) = coproporphyrinogen III + 4 CO2. The protein operates within porphyrin-containing compound metabolism; protoporphyrin-IX biosynthesis; coproporphyrinogen-III from 5-aminolevulinate: step 4/4. Its function is as follows. Catalyzes the decarboxylation of four acetate groups of uroporphyrinogen-III to yield coproporphyrinogen-III. In Corynebacterium diphtheriae (strain ATCC 700971 / NCTC 13129 / Biotype gravis), this protein is Uroporphyrinogen decarboxylase.